A 35-amino-acid polypeptide reads, in one-letter code: Natriuretic peptide TNPb (35 aa).

Cysteine 9 and cysteine 25 are disulfide-bonded.

As to expression, expressed by the venom gland.

Its subcellular location is the secreted. Snake venom natriuretic peptide that exhibits vasoactive and probable hypotensive activity. Is only weakly active on natriuretic peptide receptor-C (NPR3). Stimulates cGMP production through the natriuretic peptide receptor 1 (NPR1) with moderate potencies for the rat NPR1 (EC(50)=1200 nM), and very weak potencies over human NPR1 (30% activation at 10 uM). In vivo, does not impact systolic and diastolic blood pressure, as well as heart rate, when intravenously injected in conscious rabbits. Does not affect the bradycardia due to cardiac afferent stimulation (Bezold-Jarisch reflex). The polypeptide is Natriuretic peptide TNPb (Oxyuranus microlepidotus (Inland taipan)).